Here is a 343-residue protein sequence, read N- to C-terminus: Dihydroorotate dehydrogenase (quinone) (343 aa).

FMN contacts are provided by residues 61–65 and Thr85; that span reads AGLDK. Lys65 serves as a coordination point for substrate. 110-114 serves as a coordination point for substrate; the sequence is NRMGF. Residues Asn138 and Asn171 each contribute to the FMN site. Asn171 is a substrate binding site. Ser174 (nucleophile) is an active-site residue. Asn176 contributes to the substrate binding site. FMN contacts are provided by Lys216 and Thr244. 245-246 provides a ligand contact to substrate; that stretch reads NT. FMN contacts are provided by residues Gly267, Gly296, and 317 to 318; that span reads YS.

Belongs to the dihydroorotate dehydrogenase family. Type 2 subfamily. As to quaternary structure, monomer. The cofactor is FMN.

Its subcellular location is the cell membrane. The catalysed reaction is (S)-dihydroorotate + a quinone = orotate + a quinol. It functions in the pathway pyrimidine metabolism; UMP biosynthesis via de novo pathway; orotate from (S)-dihydroorotate (quinone route): step 1/1. Its function is as follows. Catalyzes the conversion of dihydroorotate to orotate with quinone as electron acceptor. The sequence is that of Dihydroorotate dehydrogenase (quinone) from Stutzerimonas stutzeri (strain A1501) (Pseudomonas stutzeri).